We begin with the raw amino-acid sequence, 294 residues long: MELSQLLNEIRANYEQLLTRNQIETVLSTRIQLEEDITKKMDKDGEALKAAQAELKEARRQCHHLQVEIESLHAVERGLENSLQASEQHYQMQLQDLESVIGRLERELQEVRRGIERQLREHEMLLNTKMRLEQEIATYRRLLEQEEIRYYGCIQGEKKEEKPTKSKVGFLLPSAIINEISFSTKVSQKYENENMETVTKQAVVNRDVKESAEAHGTIQTEKVDEVIKEWEGSFFKDNPRLRKKSVSLRFDLHLAATDEGCLESRQDNLPDIEVRLIMRRSCSIPSIKPPPGTN.

The IF rod domain occupies 1–150 (MELSQLLNEI…RLLEQEEIRY (150 aa)). Positions 1–151 (MELSQLLNEI…LLEQEEIRYY (151 aa)) form a coiled coil.

Belongs to the intermediate filament family.

This is Keratin-like protein KRT222 (Krt222) from Mus musculus (Mouse).